The chain runs to 338 residues: RNA 3'-terminal phosphate cyclase (338 aa).

Residues Q103 and 283–287 each bind ATP; that span reads YLADQ. The active-site Tele-AMP-histidine intermediate is the H308.

Belongs to the RNA 3'-terminal cyclase family. Type 1 subfamily.

Its subcellular location is the cytoplasm. The catalysed reaction is a 3'-end 3'-phospho-ribonucleotide-RNA + ATP = a 3'-end 2',3'-cyclophospho-ribonucleotide-RNA + AMP + diphosphate. Its function is as follows. Catalyzes the conversion of 3'-phosphate to a 2',3'-cyclic phosphodiester at the end of RNA. The mechanism of action of the enzyme occurs in 3 steps: (A) adenylation of the enzyme by ATP; (B) transfer of adenylate to an RNA-N3'P to produce RNA-N3'PP5'A; (C) and attack of the adjacent 2'-hydroxyl on the 3'-phosphorus in the diester linkage to produce the cyclic end product. The biological role of this enzyme is unknown but it is likely to function in some aspects of cellular RNA processing. The polypeptide is RNA 3'-terminal phosphate cyclase (Escherichia coli O45:K1 (strain S88 / ExPEC)).